Reading from the N-terminus, the 662-residue chain is Probable lysophospholipase 3 (662 aa).

An N-terminal signal peptide occupies residues 1–19 (MLFNCFGILALLQILPALA). Residues Asn-74, Asn-127, Asn-162, Asn-196, Asn-266, Asn-274, Asn-303, Asn-376, Asn-406, Asn-411, Asn-483, Asn-518, Asn-523, Asn-547, Asn-556, Asn-574, Asn-596, and Asn-613 are each glycosylated (N-linked (GlcNAc...) asparagine). Residues 76 to 617 (TCPSDYMLRP…EQYCWNGTTV (542 aa)) enclose the PLA2c domain.

The protein belongs to the lysophospholipase family.

The protein resides in the secreted. It catalyses the reaction a 1-acyl-sn-glycero-3-phosphocholine + H2O = sn-glycerol 3-phosphocholine + a fatty acid + H(+). Functionally, catalyzes the release of fatty acids from lysophospholipids. The protein is Probable lysophospholipase 3 (plb3) of Schizosaccharomyces pombe (strain 972 / ATCC 24843) (Fission yeast).